A 253-amino-acid chain; its full sequence is UPF0246 protein LBA1843 (253 aa).

Belongs to the UPF0246 family.

This is UPF0246 protein LBA1843 from Lactobacillus acidophilus (strain ATCC 700396 / NCK56 / N2 / NCFM).